The sequence spans 463 residues: Pentatricopeptide repeat-containing protein At2g17670 (463 aa).

The tract at residues 1–63 is disordered; it reads MGKVPSSFRS…PSLRNPFKSP (63 aa). 9 PPR repeats span residues 121-157, 158-192, 193-223, 229-263, 264-298, 299-333, 334-368, 369-403, and 404-438; these read GRSTFLILLSHACRAPDSSISNVHRVLNLMVNNGLEP, DQVTTDIAVRSLCETGRVDEAKDLMKELTEKHSPP, DTYTYNFLLKHLCKCKDLHVVYEFVDEMRDD, DLVSFTILIDNVCNSKNLREAMYLVSKLGNAGFKP, DCFLYNTIMKGFCTLSKGSEAVGVYKKMKEEGVEP, DQITYNTLIFGLSKAGRVEEARMYLKTMVDAGYEP, DTATYTSLMNGMCRKGESLGALSLLEEMEARGCAP, NDCTYNTLLHGLCKARLMDKGMELYEMMKSSGVKL, and ESNGYATLVRSLVKSGKVAEAYEVFDYAVDSKSLS.

This sequence belongs to the PPR family. P subfamily.

The chain is Pentatricopeptide repeat-containing protein At2g17670 from Arabidopsis thaliana (Mouse-ear cress).